The chain runs to 86 residues: Sec-independent protein translocase protein TatA (86 aa).

Residues Met-1–Ala-21 form a helical membrane-spanning segment.

The protein belongs to the TatA/E family. As to quaternary structure, the Tat system comprises two distinct complexes: a TatABC complex, containing multiple copies of TatA, TatB and TatC subunits, and a separate TatA complex, containing only TatA subunits. Substrates initially bind to the TatABC complex, which probably triggers association of the separate TatA complex to form the active translocon.

It is found in the cell inner membrane. In terms of biological role, part of the twin-arginine translocation (Tat) system that transports large folded proteins containing a characteristic twin-arginine motif in their signal peptide across membranes. TatA could form the protein-conducting channel of the Tat system. The protein is Sec-independent protein translocase protein TatA of Hydrogenovibrio crunogenus (strain DSM 25203 / XCL-2) (Thiomicrospira crunogena).